The following is a 136-amino-acid chain: uncharacterized protein (136 aa).

This is an uncharacterized protein from Caenorhabditis elegans.